A 1072-amino-acid chain; its full sequence is RIMS-binding protein 2 (1072 aa).

Residues 181 to 248 form the SH3 1 domain; it reads GKVHLCVARY…PSNFVDFIQD (68 aa). Fibronectin type-III domains lie at 311–404, 407–489, and 503–604; these read VPYP…GKDV, APSQ…KKEA, and PPQD…VPPA. Disordered regions lie at residues 597–681 and 713–800; these read PDLL…APVS and SAGQ…TSHN. A compositionally biased stretch (pro residues) spans 599-615; sequence LLVPPAPHPRTAPPPKP. A compositionally biased stretch (basic and acidic residues) spans 620–635; the sequence is MDTKDQHLGPHVKVDE. The span at 660-670 shows a compositional bias: low complexity; that stretch reads GPGRRSPSPSR. Ser720 and Ser728 each carry phosphoserine. Composition is skewed to basic and acidic residues over residues 730–743 and 754–765; these read EVKRRGTSVDDFLK and CHGDEYHTESSR. Positions 771-781 are enriched in acidic residues; it reads DIMEEDEEELY. Ser852 and Ser859 each carry phosphoserine. Thr861 is modified (phosphothreonine). 2 consecutive SH3 domains span residues 868–936 and 972–1039; these read LPAR…EIHA and VPTR…EVPD. Residues 1044-1072 are disordered; the sequence is HLSDAPPHYSHDPPMRSKAKRKKSVHFTP. A compositionally biased stretch (basic residues) spans 1060–1072; it reads SKAKRKKSVHFTP.

Belongs to the RIMBP family. Interacts with RIMS1, RIMS2, CACNA1D and CACNA1B, and potentially with other Ca(2+) channel alpha-1 isoforms.

The protein localises to the cell membrane. Its subcellular location is the synapse. Plays a role in the synaptic transmission as bifunctional linker that interacts simultaneously with RIMS1, RIMS2, CACNA1D and CACNA1B. This is RIMS-binding protein 2 (Rimbp2) from Mus musculus (Mouse).